A 353-amino-acid chain; its full sequence is Nicotinate-nucleotide--dimethylbenzimidazole phosphoribosyltransferase (353 aa).

Residue E319 is the Proton acceptor of the active site.

This sequence belongs to the CobT family.

It carries out the reaction 5,6-dimethylbenzimidazole + nicotinate beta-D-ribonucleotide = alpha-ribazole 5'-phosphate + nicotinate + H(+). Its pathway is nucleoside biosynthesis; alpha-ribazole biosynthesis; alpha-ribazole from 5,6-dimethylbenzimidazole: step 1/2. Its function is as follows. Catalyzes the synthesis of alpha-ribazole-5'-phosphate from nicotinate mononucleotide (NAMN) and 5,6-dimethylbenzimidazole (DMB). The sequence is that of Nicotinate-nucleotide--dimethylbenzimidazole phosphoribosyltransferase from Chlorobaculum parvum (strain DSM 263 / NCIMB 8327) (Chlorobium vibrioforme subsp. thiosulfatophilum).